Consider the following 238-residue polypeptide: Ribonuclease PH (238 aa).

Phosphate contacts are provided by residues Arg-86 and 124-126; that span reads GTR.

This sequence belongs to the RNase PH family. As to quaternary structure, homohexameric ring arranged as a trimer of dimers.

The catalysed reaction is tRNA(n+1) + phosphate = tRNA(n) + a ribonucleoside 5'-diphosphate. Functionally, phosphorolytic 3'-5' exoribonuclease that plays an important role in tRNA 3'-end maturation. Removes nucleotide residues following the 3'-CCA terminus of tRNAs; can also add nucleotides to the ends of RNA molecules by using nucleoside diphosphates as substrates, but this may not be physiologically important. Probably plays a role in initiation of 16S rRNA degradation (leading to ribosome degradation) during starvation. The sequence is that of Ribonuclease PH from Acinetobacter baylyi (strain ATCC 33305 / BD413 / ADP1).